Consider the following 127-residue polypeptide: MORF4 family-associated protein 1-like 1 (127 aa).

The stretch at 87–118 forms a coiled coil; it reads GEADERVSELCEKAEEKAKEIAKMAEMLVELV.

Belongs to the MORF4 family-associated protein family.

This Homo sapiens (Human) protein is MORF4 family-associated protein 1-like 1 (MRFAP1L1).